The sequence spans 146 residues: Urease accessory protein UreE 1 (146 aa).

It belongs to the UreE family.

It is found in the cytoplasm. In terms of biological role, involved in urease metallocenter assembly. Binds nickel. Probably functions as a nickel donor during metallocenter assembly. This Pseudomonas syringae pv. syringae (strain B728a) protein is Urease accessory protein UreE 1.